The following is a 557-amino-acid chain: Myo-inositol transporter 2 (557 aa).

The Cytoplasmic portion of the chain corresponds to Met1–Lys76. Positions Glu24–Gly69 are disordered. Residues Ser30 to Glu44 show a composition bias toward basic and acidic residues. Residues Ile77–Tyr97 traverse the membrane as a helical segment. The Extracellular segment spans residues Asp98 to Thr99. A helical membrane pass occupies residues Gly100–Gly120. The Cytoplasmic segment spans residues Gln121–Glu123. Residues Leu124–Ala144 traverse the membrane as a helical segment. At Asp145 to Asp157 the chain is on the extracellular side. A helical transmembrane segment spans residues Ala158 to Val178. At Gly179–Arg180 the chain is on the cytoplasmic side. Residues Phe181–Leu201 traverse the membrane as a helical segment. The Extracellular segment spans residues Ala202–Arg209. The chain crosses the membrane as a helical span at residues Leu210 to Ala230. Over Ala231–Arg240 the chain is Cytoplasmic. Residues Ile241–Pro261 traverse the membrane as a helical segment. Residues Glu262 to Ser367 are Extracellular-facing. A helical transmembrane segment spans residues Ile368 to Phe388. At Ile389–Arg396 the chain is on the cytoplasmic side. The chain crosses the membrane as a helical span at residues Ile397–His417. Residues Phe418–Gln432 are Extracellular-facing. A helical membrane pass occupies residues Tyr433–Ile453. At Pro454 to Leu468 the chain is on the cytoplasmic side. Residues Gly469–Leu489 form a helical membrane-spanning segment. Topologically, residues Thr490–Thr498 are extracellular. The helical transmembrane segment at Gly499–Tyr519 threads the bilayer. The Cytoplasmic portion of the chain corresponds to Pro520–Ala557.

It belongs to the major facilitator superfamily. Sugar transporter (TC 2.A.1.1) family.

The protein localises to the membrane. The enzyme catalyses myo-inositol(out) + H(+)(out) = myo-inositol(in) + H(+)(in). Transporter for myo-inositol. This Schizosaccharomyces pombe (strain 972 / ATCC 24843) (Fission yeast) protein is Myo-inositol transporter 2 (itr2).